We begin with the raw amino-acid sequence, 475 residues long: Bifunctional aspartate aminotransferase and glutamate/aspartate-prephenate aminotransferase (475 aa).

A chloroplast-targeting transit peptide spans 1 to 55; the sequence is MASQSSVAVISSAAARGESFPDSKKPIGSVRFQQPLRLSFSYCKSGNMSSRICAM. Residues G107, W193, and N243 each contribute to the L-aspartate site. Position 306 is an N6-(pyridoxal phosphate)lysine (K306). R445 is an L-aspartate binding site.

It belongs to the class-I pyridoxal-phosphate-dependent aminotransferase family. In terms of assembly, homodimer. Pyridoxal 5'-phosphate serves as cofactor.

Its subcellular location is the plastid. It is found in the chloroplast. It carries out the reaction L-aspartate + 2-oxoglutarate = oxaloacetate + L-glutamate. It catalyses the reaction L-arogenate + oxaloacetate = prephenate + L-aspartate. The catalysed reaction is L-arogenate + 2-oxoglutarate = prephenate + L-glutamate. The protein operates within amino-acid biosynthesis; L-phenylalanine biosynthesis; L-arogenate from prephenate (L-Asp route): step 1/1. Its pathway is amino-acid biosynthesis; L-phenylalanine biosynthesis; L-arogenate from prephenate (L-Glu route): step 1/1. Prokaryotic-type aspartate aminotransferase. Also has a prenate transaminase activity. Involved in the aromatic amino acids biosynthesis pathway via the arogenate route. Required for the transamination of prephenate into arogenate. Required for early development of the embryo. The polypeptide is Bifunctional aspartate aminotransferase and glutamate/aspartate-prephenate aminotransferase (PAT) (Arabidopsis thaliana (Mouse-ear cress)).